We begin with the raw amino-acid sequence, 191 residues long: Orotate phosphoribosyltransferase (191 aa).

Glutamate 114–serine 122 is a 5-phospho-alpha-D-ribose 1-diphosphate binding site. 2 residues coordinate orotate: threonine 118 and arginine 146.

The protein belongs to the purine/pyrimidine phosphoribosyltransferase family. PyrE subfamily. As to quaternary structure, homodimer. Mg(2+) serves as cofactor.

The enzyme catalyses orotidine 5'-phosphate + diphosphate = orotate + 5-phospho-alpha-D-ribose 1-diphosphate. It participates in pyrimidine metabolism; UMP biosynthesis via de novo pathway; UMP from orotate: step 1/2. Its function is as follows. Catalyzes the transfer of a ribosyl phosphate group from 5-phosphoribose 1-diphosphate to orotate, leading to the formation of orotidine monophosphate (OMP). The chain is Orotate phosphoribosyltransferase from Clostridium botulinum (strain Langeland / NCTC 10281 / Type F).